The following is a 358-amino-acid chain: tRNA-specific 2-thiouridylase MnmA (358 aa).

Residues 10-17 (AMSGGVDS) and M36 each bind ATP. The active-site Nucleophile is C105. A disulfide bridge links C105 with C202. Residue G129 participates in ATP binding. Positions 152–154 (KDQ) are interaction with tRNA. C202 serves as the catalytic Cysteine persulfide intermediate. An interaction with tRNA region spans residues 308–309 (RY).

The protein belongs to the MnmA/TRMU family.

It localises to the cytoplasm. The enzyme catalyses S-sulfanyl-L-cysteinyl-[protein] + uridine(34) in tRNA + AH2 + ATP = 2-thiouridine(34) in tRNA + L-cysteinyl-[protein] + A + AMP + diphosphate + H(+). Functionally, catalyzes the 2-thiolation of uridine at the wobble position (U34) of tRNA, leading to the formation of s(2)U34. In Magnetococcus marinus (strain ATCC BAA-1437 / JCM 17883 / MC-1), this protein is tRNA-specific 2-thiouridylase MnmA.